The following is a 225-amino-acid chain: Heptaprenylglyceryl phosphate synthase (225 aa).

A sn-glycerol 1-phosphate-binding site is contributed by Lys-6. Mg(2+)-binding residues include Asp-8 and Thr-34. Residues 153-158, Gly-183, and 203-204 each bind sn-glycerol 1-phosphate; these read YVEYSG and GN.

The protein belongs to the GGGP/HepGP synthase family. Group I subfamily. Homodimer. It depends on Mg(2+) as a cofactor.

The enzyme catalyses sn-glycerol 1-phosphate + all-trans-heptaprenyl diphosphate = 3-heptaprenyl-sn-glycero-1-phosphate + diphosphate. The protein operates within membrane lipid metabolism; glycerophospholipid metabolism. Its function is as follows. Prenyltransferase that catalyzes in vivo the transfer of the heptaprenyl moiety of heptaprenyl pyrophosphate (HepPP; 35 carbon atoms) to the C3 hydroxyl of sn-glycerol-1-phosphate (G1P), producing heptaprenylglyceryl phosphate (HepGP). This reaction is an ether-bond-formation step in the biosynthesis of archaea-type G1P-based membrane lipids found in Bacillales. This Listeria innocua serovar 6a (strain ATCC BAA-680 / CLIP 11262) protein is Heptaprenylglyceryl phosphate synthase.